Reading from the N-terminus, the 236-residue chain is Small ribosomal subunit protein uS3 (236 aa).

The region spanning 39 to 107 is the KH type-2 domain; it reads IREFLTEELK…DTSLNIVEVR (69 aa). Positions 214–236 are disordered; the sequence is ASERRAVEGDNQGSSSNRRRENA.

It belongs to the universal ribosomal protein uS3 family. As to quaternary structure, part of the 30S ribosomal subunit. Forms a tight complex with proteins S10 and S14.

Binds the lower part of the 30S subunit head. Binds mRNA in the 70S ribosome, positioning it for translation. This Brucella suis (strain ATCC 23445 / NCTC 10510) protein is Small ribosomal subunit protein uS3.